We begin with the raw amino-acid sequence, 571 residues long: L-erythrulose 1-kinase (571 aa).

In terms of domain architecture, DhaK spans 7-331 (SPDDFADEAV…WTAPVETPAY (325 aa)). His-217 serves as the catalytic Tele-hemiaminal-histidine intermediate. Residues 367-567 (RNIVAVLETF…FAMLMKALGE (201 aa)) form the DhaL domain. ATP is bound by residues 396–402 (DGDHGQG), 442–443 (TS), Gly-484, Arg-539, and 552–554 (DPG).

It carries out the reaction L-erythrulose + ATP = L-erythrulose 1-phosphate + ADP + H(+). It functions in the pathway carbohydrate metabolism; L-threitol degradation. Functionally, kinase that has a preference for L-erythrulose, producing L-erythrulose-1P. Involved in the degradation pathway of L-threitol, that allows M.smegmatis to grow on this compound as the sole carbon source. Is also able to phosphorylate D-erythrulose and dihydroxyacetone in vitro. The protein is L-erythrulose 1-kinase of Mycolicibacterium smegmatis (strain ATCC 700084 / mc(2)155) (Mycobacterium smegmatis).